We begin with the raw amino-acid sequence, 193 residues long: MNFLAHLHLAHLADSSLSGNLLADFVRGNPATHYPPDVVEGIYMHRRIDVMTDNLPEVREAREWFRHETRRVAPITLDVMWDHFLSRHWTQISPDFPLQAFVGYAHAQVATILPDSPPRFVNLNDYLWSEKWLERYRDMDFIQNVLNGMANRRPRLDALRDSWYDLDAHYDALEERFWHFYPRMMAQAARKAL.

It belongs to the AcpH family.

The enzyme catalyses holo-[ACP] + H2O = apo-[ACP] + (R)-4'-phosphopantetheine + H(+). Its function is as follows. Converts holo-ACP to apo-ACP by hydrolytic cleavage of the phosphopantetheine prosthetic group from ACP. In Salmonella choleraesuis (strain SC-B67), this protein is Acyl carrier protein phosphodiesterase.